Reading from the N-terminus, the 157-residue chain is Putative pre-16S rRNA nuclease (157 aa).

It belongs to the YqgF nuclease family.

The protein localises to the cytoplasm. In terms of biological role, could be a nuclease involved in processing of the 5'-end of pre-16S rRNA. The sequence is that of Putative pre-16S rRNA nuclease from Nitrosomonas eutropha (strain DSM 101675 / C91 / Nm57).